The primary structure comprises 468 residues: Tyrosine phenol-lyase (468 aa).

Lys-260 is subject to N6-(pyridoxal phosphate)lysine.

It belongs to the beta-eliminating lyase family. Homotetramer. Pyridoxal 5'-phosphate serves as cofactor.

The catalysed reaction is L-tyrosine + H2O = phenol + pyruvate + NH4(+). The sequence is that of Tyrosine phenol-lyase from Lacrimispora saccharolytica (strain ATCC 35040 / DSM 2544 / NRCC 2533 / WM1) (Clostridium saccharolyticum).